Here is a 325-residue protein sequence, read N- to C-terminus: Melanocortin receptor 5 (325 aa).

Residues 1-37 (MNSSFHLHFLDLNLNATEGNLSGPNVKNKSSPCEDMG) lie on the Extracellular side of the membrane. N-linked (GlcNAc...) asparagine glycosylation is found at N2, N15, N20, and N28. A helical membrane pass occupies residues 38 to 61 (IAVEVFLTLGVISLLENILVIGAI). Residues 62 to 73 (VKNKNLHSPMYF) are Cytoplasmic-facing. The helical transmembrane segment at 74–97 (FVCSLAVADMLVSMSSAWETITIY) threads the bilayer. Topologically, residues 98–114 (LLNNKHLVIADAFVRHI) are extracellular. Residues 115–138 (DNVFDSMICISVVASMCSLLAIAV) form a helical membrane-spanning segment. Residues 139–155 (DRYVTIFYALRYHHIMT) are Cytoplasmic-facing. Residues 156-179 (ARRSGAIIAGIWAFCTGCGIVFIL) traverse the membrane as a helical segment. The Extracellular portion of the chain corresponds to 180 to 186 (YSESTYV). A helical membrane pass occupies residues 187–211 (ILCLISMFFAMLFLLVSLYIHMFLL). At 212 to 239 (ARTHVKRIAALPRASSARQRTSMQGAVT) the chain is on the cytoplasmic side. Residues 240–265 (VTMLLGVFTVCWAPFFLHLTLMLSCP) traverse the membrane as a helical segment. The Extracellular portion of the chain corresponds to 266 to 273 (QNLYCSCF). The helical transmembrane segment at 274–297 (MSHFNMYLILIMCNSVMDPLIYAF) threads the bilayer. Residues 298–325 (RSQEMRKTFKEIICCRGFRIACSFPRRD) are Cytoplasmic-facing. S-palmitoyl cysteine attachment occurs at residues C311 and C312.

Belongs to the G-protein coupled receptor 1 family.

It is found in the cell membrane. Its function is as follows. Receptor for MSH (alpha, beta and gamma) and ACTH. The activity of this receptor is mediated by G proteins which activate adenylate cyclase. This receptor is a possible mediator of the immunomodulation properties of melanocortins. This is Melanocortin receptor 5 (MC5R) from Pan troglodytes (Chimpanzee).